Here is a 199-residue protein sequence, read N- to C-terminus: MLVIGLTGSIGMGKSTTARLFSEAGVPVYDADATVHAIYEGEAAFLVEAAFPGTTVNGKVDREKLSAKVVHDAAAMKRLEQIVHPLLYDYRQAFLQQAERSGAAVAVIDVPLLFETGGERSVDAVVVVTTTPEIQRERILARGNMTSEKLKAIQARQLPDAEKRKRADFVVDTSHGVDAVRTQIREILAAAAKMPRRRS.

Positions 3–199 (VIGLTGSIGM…AAAKMPRRRS (197 aa)) constitute a DPCK domain. Residue 11–16 (GMGKST) participates in ATP binding.

The protein belongs to the CoaE family.

The protein resides in the cytoplasm. It carries out the reaction 3'-dephospho-CoA + ATP = ADP + CoA + H(+). It functions in the pathway cofactor biosynthesis; coenzyme A biosynthesis; CoA from (R)-pantothenate: step 5/5. Its function is as follows. Catalyzes the phosphorylation of the 3'-hydroxyl group of dephosphocoenzyme A to form coenzyme A. The polypeptide is Dephospho-CoA kinase (Nitrobacter winogradskyi (strain ATCC 25391 / DSM 10237 / CIP 104748 / NCIMB 11846 / Nb-255)).